The sequence spans 545 residues: Chaperonin GroEL (545 aa).

Residues 30 to 33 (TLGP), Lys51, 87 to 91 (DGTTT), Gly415, and Asp495 contribute to the ATP site.

It belongs to the chaperonin (HSP60) family. In terms of assembly, forms a cylinder of 14 subunits composed of two heptameric rings stacked back-to-back. Interacts with the co-chaperonin GroES.

The protein localises to the cytoplasm. The enzyme catalyses ATP + H2O + a folded polypeptide = ADP + phosphate + an unfolded polypeptide.. Its function is as follows. Together with its co-chaperonin GroES, plays an essential role in assisting protein folding. The GroEL-GroES system forms a nano-cage that allows encapsulation of the non-native substrate proteins and provides a physical environment optimized to promote and accelerate protein folding. The polypeptide is Chaperonin GroEL (Shewanella sp. (strain ANA-3)).